A 536-amino-acid polypeptide reads, in one-letter code: Uridine 5'-monophosphate transferase (536 aa).

Residues 22 to 84 (ADHPTHTPED…GLQQCSSSPS (63 aa)) are disordered. Over residues 31–45 (DSPQTVPSPRSSSAH) the composition is skewed to polar residues. Positions 48-60 (EIQELRSLQETRP) are enriched in basic and acidic residues. The segment covering 66 to 84 (RSQSRSSKHGLQQCSSSPS) has biased composition (polar residues). LRR repeat units follow at residues 140–164 (AGQA…LHRL), 165–189 (AHLR…SLCK), 191–211 (LERI…IGAL), 212–234 (KNLS…IGQC), 236–257 (SLTT…LANL), and 258–282 (TQLK…NLDD). One can recognise a Fido domain in the interval 377 to 533 (ITLDRIFKLN…LEGIATVMNQ (157 aa)).

This sequence in the C-terminal section; belongs to the fic family. As to quaternary structure, interacts with several members of the Arabidopsis RLCK VIIa subfamily.

It is found in the secreted. Its subcellular location is the host cell. The protein localises to the host cell membrane. The enzyme catalyses L-seryl-[protein] + UTP = O-(5'-uridylyl)-L-seryl-[protein] + diphosphate. The catalysed reaction is L-threonyl-[protein] + UTP = uridylyl-L-threonyl-[protein] + diphosphate. Its function is as follows. Functions both as a virulence and an avirulence gene in Arabidopsis. Causes disease on the Kashmir (Kas) ecotype, but not on Columbia (Col-0) ecotype. Acts by directly uridylylating the conserved phosphorylation sites in the activation loop of a number of host receptor-like cytoplasmic protein kinases (RLCK), including BIK1, RIPK, PBL1 and PBL2, preventing the activation of these kinases and subsequent signal transduction. In susceptible Arabidopsis plants, uridylylation of BIK1 inhibits the PAMP-triggered immunity (PTI) signaling cascade and thereby promotes bacterial virulence. It also inhibits RPM1-dependent effector-triggered immunity (ETI) in mesophyll tissues by targeting RIPK. In contrast, in the resistant ecotype Col-0, xopAC is a major avirulence gene. Uridylylation of PBL2 triggers the PBL2-RKS1 interaction and thus the assembly of the PBL2-RKS1-ZAR1 complex, which, in turn, activates effector-triggered immunity (ETI) against X.campestris. The polypeptide is Uridine 5'-monophosphate transferase (Xanthomonas campestris pv. campestris (strain 8004)).